Here is a 186-residue protein sequence, read N- to C-terminus: Ion-translocating oxidoreductase complex subunit B (186 aa).

Residues 1 to 23 (MLTPILALTALALIAGALLGFAA) are hydrophobic. Residues 29–88 (EGNPIADQVDAVLPQTQCGQCGFGGCRPYAEAIAAGEAEINRCPPGGQDTVQTLADLLGV) form the 4Fe-4S domain. Residues Cys-46, Cys-49, Cys-54, Cys-71, Cys-114, Cys-117, Cys-120, Cys-124, Cys-144, Cys-147, Cys-150, and Cys-154 each coordinate [4Fe-4S] cluster. 4Fe-4S ferredoxin-type domains lie at 105–134 (QVAW…GAAK) and 135–164 (QMHT…MVPV).

Belongs to the 4Fe4S bacterial-type ferredoxin family. RnfB subfamily. The complex is composed of six subunits: RnfA, RnfB, RnfC, RnfD, RnfE and RnfG. [4Fe-4S] cluster is required as a cofactor.

Its subcellular location is the cell inner membrane. Functionally, part of a membrane-bound complex that couples electron transfer with translocation of ions across the membrane. This chain is Ion-translocating oxidoreductase complex subunit B, found in Alkalilimnicola ehrlichii (strain ATCC BAA-1101 / DSM 17681 / MLHE-1).